The following is a 225-amino-acid chain: Respiratory nitrate reductase 1 gamma chain (225 aa).

N-formylmethionine is present on methionine 1. At 1–3 (MQF) the chain is on the periplasmic side. A helical membrane pass occupies residues 4–29 (LNMFFFDIYPYIAGAVFLIGSWLRYD). The Cytoplasmic segment spans residues 30-47 (YGQYTWRAASSQMLDRKG). The helical transmembrane segment at 48–70 (MNLASNLFHIGILGIFVGHFFGM) threads the bilayer. Residues histidine 56 and histidine 66 each contribute to the heme b site. Residues 71–82 (LTPHWMYEAWLP) are Periplasmic-facing. A helical transmembrane segment spans residues 83–112 (IEVKQKMAMFAGGASGVLCLIGGVLLLKRR). Over 113-124 (LFSPRVRATTTG) the chain is Cytoplasmic. The helical transmembrane segment at 125–148 (ADILILSLLVIQCALGLLTIPFSA) threads the bilayer. The Periplasmic segment spans residues 149-182 (QHMDGSEMMKLVGWAQSVVTFHGGASQHLDGVAF). A helical transmembrane segment spans residues 183–198 (IFRLHLVLGMTLFLLF). The heme b site is built by histidine 187 and histidine 205. At 199–225 (PFSRLIHIWSVPVEYLTRKYQLVRARH) the chain is on the cytoplasmic side.

As to quaternary structure, dimer of heterotrimers each composed of an alpha, a beta and a gamma chain. Alpha and beta are catalytic chains; gamma chains are involved in binding the enzyme complex to the cytoplasmic membrane. Requires heme as cofactor.

It is found in the cell inner membrane. It carries out the reaction nitrate + a quinol = a quinone + nitrite + H2O. The nitrate reductase enzyme complex allows E.coli to use nitrate as an electron acceptor during anaerobic growth. The gamma chain is a membrane-embedded heme-iron unit resembling cytochrome b, which transfers electrons from quinones to the beta subunit. In Escherichia coli (strain K12), this protein is Respiratory nitrate reductase 1 gamma chain (narI).